The sequence spans 288 residues: Pantothenate synthetase (288 aa).

Residue 30–37 (MGFLHEGH) coordinates ATP. The Proton donor role is filled by His-37. (R)-pantoate is bound at residue Gln-61. Residue Gln-61 coordinates beta-alanine. 147-150 (GLKD) provides a ligand contact to ATP. Gln-153 is a (R)-pantoate binding site. ATP contacts are provided by residues Val-176 and 184–187 (KSSR).

It belongs to the pantothenate synthetase family. Homodimer.

It is found in the cytoplasm. It carries out the reaction (R)-pantoate + beta-alanine + ATP = (R)-pantothenate + AMP + diphosphate + H(+). Its pathway is cofactor biosynthesis; (R)-pantothenate biosynthesis; (R)-pantothenate from (R)-pantoate and beta-alanine: step 1/1. Functionally, catalyzes the condensation of pantoate with beta-alanine in an ATP-dependent reaction via a pantoyl-adenylate intermediate. This is Pantothenate synthetase from Bacillus pumilus (strain SAFR-032).